The following is a 365-amino-acid chain: Phosphatidylcholine:ceramide cholinephosphotransferase 2 (365 aa).

Over residues 1-14 the composition is skewed to basic and acidic residues; it reads MDIIETAKLEEHLE. Residues 1–52 form a disordered region; sequence MDIIETAKLEEHLENQPSDPTNTYTRPTEPVEEENKNGNGKPKSLSSGLRKG. Over residues 15 to 26 the composition is skewed to polar residues; the sequence is NQPSDPTNTYTR. The next 5 helical transmembrane spans lie at 80-100, 128-148, 159-179, 218-240, and 248-268; these read GIAF…ITVV, FSVS…QWLF, FCFI…VTTL, HILC…YLFI, and FWWY…CILV. H229 is an active-site residue. Active-site residues include H272 and D276. Residues 273–290 traverse the membrane as a helical segment; it reads YTVDVIIAYYITTRLFWW. Residues 291–365 are Cytoplasmic-facing; sequence YHSMANEKNL…KIGEDNEKST (75 aa). Residues C331, C332, C343, and C348 are each lipidated (S-palmitoyl cysteine).

Belongs to the sphingomyelin synthase family. In terms of processing, palmitoylated on Cys-331, Cys-332, Cys-343 and Cys-348; which plays an important role in plasma membrane localization.

It localises to the cell membrane. Its subcellular location is the golgi apparatus membrane. It catalyses the reaction an N-acylsphing-4-enine + a 1,2-diacyl-sn-glycero-3-phosphocholine = a sphingomyelin + a 1,2-diacyl-sn-glycerol. It carries out the reaction an N-acylsphinganine + a 1,2-diacyl-sn-glycero-3-phosphocholine = an N-acylsphinganine-1-phosphocholine + a 1,2-diacyl-sn-glycerol. The enzyme catalyses an N-acyl-(4R)-4-hydroxysphinganine + a 1,2-diacyl-sn-glycero-3-phosphocholine = an N-acyl-(4R)-4-hydroxysphinganine-phosphocholine + a 1,2-diacyl-sn-glycerol. The catalysed reaction is an N-acylsphing-4-enine + a 1,2-diacyl-sn-glycero-3-phosphoethanolamine = an N-acylsphing-4-enine 1-phosphoethanolamine + a 1,2-diacyl-sn-glycerol. It catalyses the reaction an N-acylsphinganine + a 1,2-diacyl-sn-glycero-3-phosphoethanolamine = an N-acylsphinganine-1-phosphoethanolamine + a 1,2-diacyl-sn-glycerol. It carries out the reaction an N-acyl-(4R)-4-hydroxysphinganine + a 1,2-diacyl-sn-glycero-3-phosphoethanolamine = an N-acyl-(4R)-4-hydroxysphinganine-1-phosphoethanolamine + a 1,2-diacyl-sn-glycerol. The enzyme catalyses 1,2-dihexadecanoyl-sn-glycero-3-phosphocholine + an N-acylsphing-4-enine = 1,2-dihexadecanoyl-sn-glycerol + a sphingomyelin. The catalysed reaction is 1-(9Z-octadecenoyl)-2-acyl-sn-3-glycerol + a sphingomyelin = a 1-(9Z-octadecenoyl)-2-acyl-sn-glycero-3-phosphocholine + an N-acylsphing-4-enine. It catalyses the reaction N-hexadecanoylsphinganine + a 1,2-diacyl-sn-glycero-3-phosphocholine = N-hexadecanoyl-sphinganine-1-phosphocholine + a 1,2-diacyl-sn-glycerol. It carries out the reaction N-hexadecanoyl-(4R)-hydroxysphinganine + a 1,2-diacyl-sn-glycero-3-phosphocholine = N-hexadecanoyl-(4R)-hydroxysphinganine-phosphocholine + a 1,2-diacyl-sn-glycerol. The enzyme catalyses N-hexadecanoylsphinganine + a 1,2-diacyl-sn-glycero-3-phosphoethanolamine = N-hexadecanoyl-sphinganine-1-phosphoethanolamine + a 1,2-diacyl-sn-glycerol. The catalysed reaction is N-hexadecanoyl-(4R)-hydroxysphinganine + a 1,2-diacyl-sn-glycero-3-phosphoethanolamine = N-hexadecanoyl-(4R)-hydroxysphinganine-1-phosphoethanolamine + a 1,2-diacyl-sn-glycerol. Its pathway is sphingolipid metabolism. Sphingomyelin synthase that primarily contributes to sphingomyelin synthesis and homeostasis at the plasma membrane. Catalyzes the reversible transfer of phosphocholine moiety in sphingomyelin biosynthesis: in the forward reaction transfers phosphocholine head group of phosphatidylcholine (PC) on to ceramide (CER) to form ceramide phosphocholine (sphingomyelin, SM) and diacylglycerol (DAG) as by-product, and in the reverse reaction transfers phosphocholine from SM to DAG to form PC and CER. The direction of the reaction appears to depend on the levels of CER and DAG in the plasma membrane. Does not use free phosphorylcholine or CDP-choline as donors. Can also transfer phosphoethanolamine head group of phosphatidylethanolamine (PE) on to ceramide (CER) to form ceramide phosphoethanolamine (CPE). Regulates receptor-mediated signal transduction via mitogenic DAG and proapoptotic CER, as well as via SM, a structural component of membrane rafts that serve as platforms for signal transduction and protein sorting. To a lesser extent, plays a role in secretory transport via regulation of DAG pool at the Golgi apparatus and its downstream effects on PRKD1. Required for normal bone matrix mineralization. This Macaca fascicularis (Crab-eating macaque) protein is Phosphatidylcholine:ceramide cholinephosphotransferase 2 (SGMS2).